The sequence spans 608 residues: UvrABC system protein C (608 aa).

Residues 13 to 91 (HDPGVYRMFD…IKTFQPRYNV (79 aa)) form the GIY-YIG domain. A UVR domain is found at 201–236 (QQVLDHLIAKMETASRALDFENAARFRDQIQAVRAV).

This sequence belongs to the UvrC family. As to quaternary structure, interacts with UvrB in an incision complex.

It is found in the cytoplasm. Functionally, the UvrABC repair system catalyzes the recognition and processing of DNA lesions. UvrC both incises the 5' and 3' sides of the lesion. The N-terminal half is responsible for the 3' incision and the C-terminal half is responsible for the 5' incision. This chain is UvrABC system protein C, found in Actinobacillus succinogenes (strain ATCC 55618 / DSM 22257 / CCUG 43843 / 130Z).